We begin with the raw amino-acid sequence, 434 residues long: Maltoporin (434 aa).

The signal sequence occupies residues 1 to 25; the sequence is MKMKAKWLPIAAAVTAALASQAAFA.

The protein belongs to the porin LamB (TC 1.B.3) family. As to quaternary structure, homotrimer formed of three 18-stranded antiparallel beta-barrels, containing three independent channels.

Its subcellular location is the cell outer membrane. It catalyses the reaction beta-maltose(in) = beta-maltose(out). Involved in the transport of maltose and maltodextrins. The polypeptide is Maltoporin (Aeromonas hydrophila).